The primary structure comprises 328 residues: GTP 3',8-cyclase (328 aa).

A Radical SAM core domain is found at 1 to 229 (MNQVDYLRIS…DAQVRGAGPA (229 aa)). Arginine 8 is a binding site for GTP. [4Fe-4S] cluster contacts are provided by cysteine 15 and cysteine 19. S-adenosyl-L-methionine is bound at residue tyrosine 21. Cysteine 22 provides a ligand contact to [4Fe-4S] cluster. Arginine 60 lines the GTP pocket. Glycine 64 is an S-adenosyl-L-methionine binding site. Residue threonine 91 coordinates GTP. Position 115 (serine 115) interacts with S-adenosyl-L-methionine. Position 155 (lysine 155) interacts with GTP. Methionine 189 is an S-adenosyl-L-methionine binding site. [4Fe-4S] cluster is bound by residues cysteine 252 and cysteine 255. 257–259 (RMR) lines the GTP pocket. Cysteine 269 contributes to the [4Fe-4S] cluster binding site.

Belongs to the radical SAM superfamily. MoaA family. Monomer and homodimer. Requires [4Fe-4S] cluster as cofactor.

The catalysed reaction is GTP + AH2 + S-adenosyl-L-methionine = (8S)-3',8-cyclo-7,8-dihydroguanosine 5'-triphosphate + 5'-deoxyadenosine + L-methionine + A + H(+). Its pathway is cofactor biosynthesis; molybdopterin biosynthesis. Functionally, catalyzes the cyclization of GTP to (8S)-3',8-cyclo-7,8-dihydroguanosine 5'-triphosphate. In Nostoc sp. (strain PCC 7120 / SAG 25.82 / UTEX 2576), this protein is GTP 3',8-cyclase.